A 104-amino-acid polypeptide reads, in one-letter code: MKFRPLHDRVVVKRIDAEEKTAGGIIIPDTVKEKPSQGEVIAVGPGGRDESGKLIPIDVRVGDRVLFGKWSGTEVKIDTQELLIMKESDIMGVLADVSSKKKAA.

The protein belongs to the GroES chaperonin family. Heptamer of 7 subunits arranged in a ring. Interacts with the chaperonin GroEL.

The protein resides in the cytoplasm. In terms of biological role, together with the chaperonin GroEL, plays an essential role in assisting protein folding. The GroEL-GroES system forms a nano-cage that allows encapsulation of the non-native substrate proteins and provides a physical environment optimized to promote and accelerate protein folding. GroES binds to the apical surface of the GroEL ring, thereby capping the opening of the GroEL channel. The polypeptide is Co-chaperonin GroES 2 (Bradyrhizobium diazoefficiens (strain JCM 10833 / BCRC 13528 / IAM 13628 / NBRC 14792 / USDA 110)).